An 83-amino-acid chain; its full sequence is MVTMAIKNFHIQDDRLKNGRGNKTMSESDYNTSDSGGWVLVRKKRDRSTRPPDVVDRWSNSTSTFPMGLDQIKIKRNGCVNTY.

Positions 15–36 (RLKNGRGNKTMSESDYNTSDSG) are disordered. The span at 21–35 (GNKTMSESDYNTSDS) shows a compositional bias: polar residues.

This is an uncharacterized protein from Aedes vexans (Inland floodwater mosquito).